The chain runs to 914 residues: Valine--tRNA ligase (914 aa).

The short motif at Pro45–His55 is the 'HIGH' region element. Residues Lys538–Ser542 carry the 'KMSKS' region motif. Lys541 is a binding site for ATP. Residues Leu847 to Ser914 adopt a coiled-coil conformation.

The protein belongs to the class-I aminoacyl-tRNA synthetase family. ValS type 1 subfamily. Monomer.

The protein resides in the cytoplasm. The catalysed reaction is tRNA(Val) + L-valine + ATP = L-valyl-tRNA(Val) + AMP + diphosphate. Its function is as follows. Catalyzes the attachment of valine to tRNA(Val). As ValRS can inadvertently accommodate and process structurally similar amino acids such as threonine, to avoid such errors, it has a 'posttransfer' editing activity that hydrolyzes mischarged Thr-tRNA(Val) in a tRNA-dependent manner. The sequence is that of Valine--tRNA ligase from Parasynechococcus marenigrum (strain WH8102).